Here is an 89-residue protein sequence, read N- to C-terminus: Small ribosomal subunit protein uS15 (89 aa).

A compositionally biased stretch (basic and acidic residues) spans 1 to 10 (MSITAEKKQE). Positions 1–24 (MSITAEKKQEVIQSNARAEGDTGS) are disordered.

Belongs to the universal ribosomal protein uS15 family. In terms of assembly, part of the 30S ribosomal subunit. Forms a bridge to the 50S subunit in the 70S ribosome, contacting the 23S rRNA.

Its function is as follows. One of the primary rRNA binding proteins, it binds directly to 16S rRNA where it helps nucleate assembly of the platform of the 30S subunit by binding and bridging several RNA helices of the 16S rRNA. In terms of biological role, forms an intersubunit bridge (bridge B4) with the 23S rRNA of the 50S subunit in the ribosome. This Novosphingobium aromaticivorans (strain ATCC 700278 / DSM 12444 / CCUG 56034 / CIP 105152 / NBRC 16084 / F199) protein is Small ribosomal subunit protein uS15.